The following is a 463-amino-acid chain: Ribosomal protein uS12 methylthiotransferase RimO (463 aa).

Residues 1–26 form a disordered region; the sequence is MPAMSQNPPLLRPDLAPAPIFDTSRR. A compositionally biased stretch (low complexity) spans 8–19; that stretch reads PPLLRPDLAPAP. Residues 30 to 140 enclose the MTTase N-terminal domain; the sequence is PTIGMVSLGC…VLDAVHHAVP (111 aa). [4Fe-4S] cluster contacts are provided by C39, C75, C104, C171, C175, and C178. One can recognise a Radical SAM core domain in the interval 157 to 395; it reads LTPRHYSYLK…MQKAQAISEA (239 aa). The region spanning 398–463 is the TRAM domain; it reads AAKVGHRIEV…AGEYDLWGRL (66 aa).

The protein belongs to the methylthiotransferase family. RimO subfamily. The cofactor is [4Fe-4S] cluster.

Its subcellular location is the cytoplasm. It catalyses the reaction L-aspartate(89)-[ribosomal protein uS12]-hydrogen + (sulfur carrier)-SH + AH2 + 2 S-adenosyl-L-methionine = 3-methylsulfanyl-L-aspartate(89)-[ribosomal protein uS12]-hydrogen + (sulfur carrier)-H + 5'-deoxyadenosine + L-methionine + A + S-adenosyl-L-homocysteine + 2 H(+). Its function is as follows. Catalyzes the methylthiolation of an aspartic acid residue of ribosomal protein uS12. The protein is Ribosomal protein uS12 methylthiotransferase RimO of Paracoccus denitrificans (strain Pd 1222).